A 111-amino-acid chain; its full sequence is Probable 4-amino-4-deoxy-L-arabinose-phosphoundecaprenol flippase subunit ArnE (111 aa).

3 helical membrane passes run 38-58 (LWLG…LLVL), 61-81 (LPVG…TLAA), and 91-111 (PRHW…GSAA). Residues 40 to 109 (LGLALICMGA…IISGIIILGS (70 aa)) enclose the EamA domain.

The protein belongs to the ArnE family. In terms of assembly, heterodimer of ArnE and ArnF.

The protein localises to the cell inner membrane. Its pathway is bacterial outer membrane biogenesis; lipopolysaccharide biosynthesis. Translocates 4-amino-4-deoxy-L-arabinose-phosphoundecaprenol (alpha-L-Ara4N-phosphoundecaprenol) from the cytoplasmic to the periplasmic side of the inner membrane. The chain is Probable 4-amino-4-deoxy-L-arabinose-phosphoundecaprenol flippase subunit ArnE from Salmonella choleraesuis (strain SC-B67).